Here is a 120-residue protein sequence, read N- to C-terminus: V-type proton ATPase subunit F (120 aa).

It belongs to the V-ATPase F subunit family. As to quaternary structure, V-ATPase is a heteromultimeric enzyme composed of a peripheral catalytic V1 complex (components A to H) attached to an integral membrane V0 proton pore complex (components: a, c, c', c'', d, e, f and VOA1).

The protein localises to the vacuole membrane. Functionally, subunit of the V1 complex of vacuolar(H+)-ATPase (V-ATPase), a multisubunit enzyme composed of a peripheral complex (V1) that hydrolyzes ATP and a membrane integral complex (V0) that translocates protons. V-ATPase is responsible for acidifying and maintaining the pH of intracellular compartments. The chain is V-type proton ATPase subunit F from Schizosaccharomyces pombe (strain 972 / ATCC 24843) (Fission yeast).